A 354-amino-acid polypeptide reads, in one-letter code: Petrobactin import system permease protein FatC (354 aa).

9 helical membrane-spanning segments follow: residues tyrosine 37–valine 57, isoleucine 77–phenylalanine 97, leucine 116–phenylalanine 136, serine 141–leucine 161, leucine 168–phenylalanine 188, proline 214–histidine 234, valine 259–proline 279, tyrosine 302–methionine 322, and glutamine 329–leucine 349.

Belongs to the binding-protein-dependent transport system permease family. FecCD subfamily. In terms of assembly, the complex is composed of two ATP-binding proteins (FatE), two transmembrane proteins (FatC and FatD) and a solute-binding protein (FpuA).

Its subcellular location is the cell membrane. Its function is as follows. Part of an ABC transporter complex involved in ferric-petrobactin uptake. Probably responsible for the translocation of the substrate across the membrane. The sequence is that of Petrobactin import system permease protein FatC from Bacillus anthracis.